Consider the following 311-residue polypeptide: Aspartate carbamoyltransferase catalytic subunit (311 aa).

The carbamoyl phosphate site is built by arginine 55 and threonine 56. Lysine 85 serves as a coordination point for L-aspartate. Positions 106, 135, and 138 each coordinate carbamoyl phosphate. L-aspartate-binding residues include arginine 168 and arginine 230. Carbamoyl phosphate is bound by residues leucine 268 and proline 269.

Belongs to the aspartate/ornithine carbamoyltransferase superfamily. ATCase family. In terms of assembly, heterododecamer (2C3:3R2) of six catalytic PyrB chains organized as two trimers (C3), and six regulatory PyrI chains organized as three dimers (R2).

The enzyme catalyses carbamoyl phosphate + L-aspartate = N-carbamoyl-L-aspartate + phosphate + H(+). Its pathway is pyrimidine metabolism; UMP biosynthesis via de novo pathway; (S)-dihydroorotate from bicarbonate: step 2/3. Its function is as follows. Catalyzes the condensation of carbamoyl phosphate and aspartate to form carbamoyl aspartate and inorganic phosphate, the committed step in the de novo pyrimidine nucleotide biosynthesis pathway. The polypeptide is Aspartate carbamoyltransferase catalytic subunit (Buchnera aphidicola subsp. Schizaphis graminum (strain Sg)).